The primary structure comprises 692 residues: Elongation factor G (692 aa).

Residues 8-283 (NRIRNIGIAA…AVIDYLPAPT (276 aa)) enclose the tr-type G domain. GTP-binding positions include 17–24 (AHIDAGKT), 81–85 (DTPGH), and 135–138 (NKMD).

The protein belongs to the TRAFAC class translation factor GTPase superfamily. Classic translation factor GTPase family. EF-G/EF-2 subfamily.

It is found in the cytoplasm. In terms of biological role, catalyzes the GTP-dependent ribosomal translocation step during translation elongation. During this step, the ribosome changes from the pre-translocational (PRE) to the post-translocational (POST) state as the newly formed A-site-bound peptidyl-tRNA and P-site-bound deacylated tRNA move to the P and E sites, respectively. Catalyzes the coordinated movement of the two tRNA molecules, the mRNA and conformational changes in the ribosome. The chain is Elongation factor G from Helicobacter pylori (strain Shi470).